The sequence spans 343 residues: Signaling lymphocytic activation molecule (343 aa).

An N-terminal signal peptide occupies residues 1-24 (MDPKGSLSWRILLFLSLAFELSYG). The Extracellular portion of the chain corresponds to 25 to 242 (TGGGVMDCPV…KQESSSESSP (218 aa)). The 110-residue stretch at 29–138 (VMDCPVILQK…VQQFCKQLKL (110 aa)) folds into the Ig-like V-type domain. Residues Asn-54, Asn-58, Asn-103, Asn-126, Asn-151, Asn-158, Asn-192, Asn-211, and Asn-226 are each glycosylated (N-linked (GlcNAc...) asparagine). Positions 145 to 228 (PEIKVLNKTQ…SSISRTFNLS (84 aa)) constitute an Ig-like C2-type domain. 2 cysteine pairs are disulfide-bonded: Cys-161/Cys-232 and Cys-167/Cys-212. The chain crosses the membrane as a helical span at residues 243-265 (WMQYTLVPLGVVIIFILVFTAII). The Cytoplasmic portion of the chain corresponds to 266 to 343 (MMKRQGKSNH…VYASVTLPES (78 aa)). The ITSM 1 signature appears at 286 to 291 (TIYAQV). Phosphotyrosine; by FYN is present on residues Tyr-288, Tyr-315, and Tyr-335. Residues 313–318 (TIYVAA) carry the SH2-binding motif. The segment at 320-343 (EPAPESVQEPNPTTVYASVTLPES) is disordered. Over residues 327-343 (QEPNPTTVYASVTLPES) the composition is skewed to polar residues. The ITSM 2 signature appears at 333-338 (TVYASV).

In terms of assembly, interacts (via cytoplasmic domain) with SH2D1A and SH2D1B; SH2D1A mediates association with FYN; SH2D1A binds to phosphorylated and not phosphorylated ITSM 1. Interacts (via cytoplasmic domain phosphorylated on tyrosine residues) with INPP5D and PTPN11; presence of SH2D1A facilitates binding to INPP5D. Interacts with MAP4K1. Interacts with PIK3C3, BECN1 and UVRAG; indicative for an association with PI3K complex II (PI3KC3-C2). Phosphorylated on tyrosine residues by FYN.

It localises to the cell membrane. Functionally, self-ligand receptor of the signaling lymphocytic activation molecule (SLAM) family. SLAM receptors triggered by homo- or heterotypic cell-cell interactions are modulating the activation and differentiation of a wide variety of immune cells and thus are involved in the regulation and interconnection of both innate and adaptive immune response. Activities are controlled by presence or absence of small cytoplasmic adapter proteins, SH2D1A/SAP and/or SH2D1B/EAT-2. SLAMF1-induced signal-transduction events in T-lymphocytes are different from those in B-cells. Two modes of SLAMF1 signaling seem to exist: one depending on SH2D1A (and perhaps SH2D1B) and another in which protein-tyrosine phosphatase 2C (PTPN11)-dependent signal transduction operates. Initially it has been proposed that association with SH2D1A prevents binding to inhibitory effectors including INPP5D/SHIP1 and PTPN11/SHP-2. However, signaling is also regulated by SH2D1A which can simultaneously interact with and recruit FYN which subsequently phosphorylates and activates SLAMF1. Mediates IL-2-independent proliferation of activated T-cells during immune responses and induces IFN-gamma production. Downstreaming signaling involves INPP5D, DOK1 and DOK2 leading to inhibited IFN-gamma production in T-cells, and PRKCQ, BCL10 and NFKB1 leading to increased T-cell activation and Th2 cytokine production. Promotes T-cell receptor-induced IL-4 secretion by CD4(+) cells. Inhibits antigen receptor-mediated production of IFN-gamma, but not IL-2, in CD4(-)/CD8(-) T-cells. Required for IL-4 production by germinal centers T follicular helper (T(Fh))cells. May inhibit CD40-induced signal transduction in monocyte-derived dendritic cells. May play a role in allergic responses and may regulate allergen-induced Th2 cytokine and Th1 cytokine secretion. In conjunction with SLAMF6 controls the transition between positive selection and the subsequent expansion and differentiation of the thymocytic natural killer T (NKT) cell lineage. Involved in the peripheral differentiation of indifferent natural killer T (iNKT) cells toward a regulatory NKT2 type. In macrophages involved in down-regulation of IL-12, TNF-alpha and nitric oxide in response to lipopolysaccharide (LPS). In B-cells activates the ERK signaling pathway independently of SH2D1A but implicating both, SYK and INPP5D, and activates Akt signaling dependent on SYK and SH2D1A. In conjunction with CD84/SLAMF5 and SLAMF6 may be a negative regulator of the humoral immune response. (Microbial infection) Involved in innate immune response against Gram-negative bacteria in macrophages; probably recognizes OmpC and/or OmpF on the bacterial surface, regulates phagosome maturation and recruitment of the PI3K complex II (PI3KC3-C2) leading to accumulated of PdtIns(3)P and NOX2 activity in the phagosomes. The protein is Signaling lymphocytic activation molecule (Slamf1) of Mus musculus (Mouse).